We begin with the raw amino-acid sequence, 400 residues long: Subtilisin-like protease 7 (400 aa).

The first 20 residues, 1 to 20 (MGFITKAIPLALAAASVING), serve as a signal peptide directing secretion. Positions 21-119 (AEIMETRAGV…IERDARVQIN (99 aa)) are excised as a propeptide. The 83-residue stretch at 36–118 (KYIVVMNDGM…YIERDARVQI (83 aa)) folds into the Inhibitor I9 domain. N58 is a glycosylation site (N-linked (GlcNAc...) asparagine). A Peptidase S8 domain is found at 129–400 (SWGLARVGSK…SKLINNGSGM (272 aa)). Active-site charge relay system residues include D161 and H192. N-linked (GlcNAc...) asparagine glycosylation is found at N222 and N252. The active-site Charge relay system is the S346. N396 is a glycosylation site (N-linked (GlcNAc...) asparagine).

The protein belongs to the peptidase S8 family.

It is found in the secreted. Secreted subtilisin-like serine protease with keratinolytic activity that contributes to pathogenicity. This is Subtilisin-like protease 7 (SUB7) from Trichophyton verrucosum (Cattle ringworm fungus).